The chain runs to 367 residues: Glycolate oxidase 3 (367 aa).

One can recognise an FMN hydroxy acid dehydrogenase domain in the interval 1–360 (MELITNVSEY…TRNHVITDSD (360 aa)). Y25 is a binding site for glyoxylate. FMN-binding positions include 78–80 (PSA), S107, 128–130 (QLY), and T156. Glyoxylate is bound at residue Y130. Residue R165 participates in glyoxylate binding. 2 residues coordinate FMN: K231 and S253. H255 and R258 together coordinate glyoxylate. Catalysis depends on H255, which acts as the Proton acceptor. Residues 286–290 (DGGVR) and 309–310 (GR) each bind FMN. The short motif at 365–367 (SRL) is the Microbody targeting signal element.

This sequence belongs to the FMN-dependent alpha-hydroxy acid dehydrogenase family. In terms of assembly, homotetramer. FMN is required as a cofactor.

The protein localises to the peroxisome. The enzyme catalyses glycolate + O2 = glyoxylate + H2O2. The protein operates within photosynthesis; photorespiration; glycine from 2-phosphoglycolate: step 2/3. Its function is as follows. Catalyzes the oxidation of glycolate to glyoxylate, with a reduction of O2 to H2O2. Is a key enzyme in photorespiration in green plants. This Oryza sativa subsp. indica (Rice) protein is Glycolate oxidase 3 (GLO3).